A 64-amino-acid chain; its full sequence is uncharacterized protein (64 aa).

A helical membrane pass occupies residues 15 to 37 (VVVPRFVRFIVYVVLFTVAVQRV).

This sequence belongs to the HHV-5 US34A protein family.

It is found in the host membrane. This is an uncharacterized protein from Homo sapiens (Human).